We begin with the raw amino-acid sequence, 164 residues long: Thiol peroxidase (164 aa).

The Thioredoxin domain maps to 18 to 163 (VKTGETAPEF…FESALEAYRN (146 aa)). The active-site Cysteine sulfenic acid (-SOH) intermediate is the Cys60. A disulfide bridge links Cys60 with Cys93.

It belongs to the peroxiredoxin family. Tpx subfamily. In terms of assembly, homodimer.

It carries out the reaction a hydroperoxide + [thioredoxin]-dithiol = an alcohol + [thioredoxin]-disulfide + H2O. In terms of biological role, thiol-specific peroxidase that catalyzes the reduction of hydrogen peroxide and organic hydroperoxides to water and alcohols, respectively. Plays a role in cell protection against oxidative stress by detoxifying peroxides. The polypeptide is Thiol peroxidase (Staphylococcus saprophyticus subsp. saprophyticus (strain ATCC 15305 / DSM 20229 / NCIMB 8711 / NCTC 7292 / S-41)).